The chain runs to 954 residues: Glycine dehydrogenase (decarboxylating) (954 aa).

The residue at position 701 (lysine 701) is an N6-(pyridoxal phosphate)lysine.

It belongs to the GcvP family. In terms of assembly, the glycine cleavage system is composed of four proteins: P, T, L and H. Pyridoxal 5'-phosphate serves as cofactor.

It catalyses the reaction N(6)-[(R)-lipoyl]-L-lysyl-[glycine-cleavage complex H protein] + glycine + H(+) = N(6)-[(R)-S(8)-aminomethyldihydrolipoyl]-L-lysyl-[glycine-cleavage complex H protein] + CO2. The glycine cleavage system catalyzes the degradation of glycine. The P protein binds the alpha-amino group of glycine through its pyridoxal phosphate cofactor; CO(2) is released and the remaining methylamine moiety is then transferred to the lipoamide cofactor of the H protein. The polypeptide is Glycine dehydrogenase (decarboxylating) (Bordetella parapertussis (strain 12822 / ATCC BAA-587 / NCTC 13253)).